An 89-amino-acid chain; its full sequence is Small ribosomal subunit protein uS15 (89 aa).

It belongs to the universal ribosomal protein uS15 family. In terms of assembly, part of the 30S ribosomal subunit. Forms a bridge to the 50S subunit in the 70S ribosome, contacting the 23S rRNA.

In terms of biological role, one of the primary rRNA binding proteins, it binds directly to 16S rRNA where it helps nucleate assembly of the platform of the 30S subunit by binding and bridging several RNA helices of the 16S rRNA. Functionally, forms an intersubunit bridge (bridge B4) with the 23S rRNA of the 50S subunit in the ribosome. The polypeptide is Small ribosomal subunit protein uS15 (Parvibaculum lavamentivorans (strain DS-1 / DSM 13023 / NCIMB 13966)).